The chain runs to 185 residues: Comitin (185 aa).

Positions Met1 to Pro123 constitute a Bulb-type lectin domain. Residues Ser138–Tyr185 form a disordered region. A compositionally biased stretch (low complexity) spans Pro141–Gln157. 5 repeat units span residues Gly153–Pro158, Gly159–Pro164, Gly165–His170, Gly171–His176, and Gly177–Pro182. The 5 X 6 AA tandem repeats of G-Y-P-X-Q-[PH] stretch occupies residues Gly153 to Pro182. Over residues Pro158–Gly171 the composition is skewed to pro residues. Positions Tyr172–Tyr185 are enriched in low complexity.

As to quaternary structure, homodimer in solution. In terms of processing, the N-terminus is blocked.

It localises to the golgi apparatus membrane. The protein localises to the endomembrane system. It is found in the cytoplasm. Its subcellular location is the cytoskeleton. In terms of biological role, may have a role in cell motility. It has high affinity for both G-actin and F-actin. Binds to vesicle membranes via mannose residues and, by way of its interaction with actin, links these membranes to the cytoskeleton. This chain is Comitin (comA), found in Dictyostelium discoideum (Social amoeba).